A 129-amino-acid polypeptide reads, in one-letter code: Large ribosomal subunit protein uL22 (129 aa).

The protein belongs to the universal ribosomal protein uL22 family. Part of the 50S ribosomal subunit.

This protein binds specifically to 23S rRNA; its binding is stimulated by other ribosomal proteins, e.g. L4, L17, and L20. It is important during the early stages of 50S assembly. It makes multiple contacts with different domains of the 23S rRNA in the assembled 50S subunit and ribosome. Functionally, the globular domain of the protein is located near the polypeptide exit tunnel on the outside of the subunit, while an extended beta-hairpin is found that lines the wall of the exit tunnel in the center of the 70S ribosome. The chain is Large ribosomal subunit protein uL22 from Rhizobium etli (strain ATCC 51251 / DSM 11541 / JCM 21823 / NBRC 15573 / CFN 42).